Consider the following 74-residue polypeptide: Serine protease inhibitor Kazal-type 7 (74 aa).

The first 17 residues, methionine 1 to cysteine 17, serve as a signal peptide directing secretion. Positions asparagine 18–cysteine 74 constitute a Kazal-like domain. Intrachain disulfides connect cysteine 21-cysteine 56, cysteine 34-cysteine 53, and cysteine 42-cysteine 74.

It is found in the secreted. Probable serine protease inhibitor. This Rattus norvegicus (Rat) protein is Serine protease inhibitor Kazal-type 7 (Spink7).